Here is a 515-residue protein sequence, read N- to C-terminus: Na(+)/H(+) antiporter NhaB (515 aa).

Transmembrane regions (helical) follow at residues 23 to 43 (LAIIIFLIINPLIFFFINPFV), 45 to 65 (GWLLVIEFIFTLAMALKCYPL), 96 to 116 (VVLLLIFMVAGIYFMKQLLLF), 136 to 156 (CLASAFLSAFLDALTVIAVVI), 204 to 224 (LMMHAGVGTALGGVMTMVGEP), 245 to 265 (APITLPVFICGLLVCFLVEHF), 305 to 325 (ALIGIWLIVALAFHLAEVGLI), 349 to 369 (FEEALPFTALLTVFFSIVAVI), 393 to 413 (LFYLFNGLLSSVSDNVFVGTV), 449 to 469 (ATPNGQAAFLFLLTSTLSPLI), and 480 to 500 (ALPYTIVMTLVGLLCVEFLLI).

Belongs to the NhaB Na(+)/H(+) (TC 2.A.34) antiporter family.

The protein localises to the cell inner membrane. It catalyses the reaction 2 Na(+)(in) + 3 H(+)(out) = 2 Na(+)(out) + 3 H(+)(in). Na(+)/H(+) antiporter that extrudes sodium in exchange for external protons. The chain is Na(+)/H(+) antiporter NhaB from Photorhabdus laumondii subsp. laumondii (strain DSM 15139 / CIP 105565 / TT01) (Photorhabdus luminescens subsp. laumondii).